The following is a 195-amino-acid chain: Urease accessory protein UreG (195 aa).

GTP is bound at residue 9–16 (GPVGSGKT).

It belongs to the SIMIBI class G3E GTPase family. UreG subfamily. Homodimer. UreD, UreF and UreG form a complex that acts as a GTP-hydrolysis-dependent molecular chaperone, activating the urease apoprotein by helping to assemble the nickel containing metallocenter of UreC. The UreE protein probably delivers the nickel.

It is found in the cytoplasm. Facilitates the functional incorporation of the urease nickel metallocenter. This process requires GTP hydrolysis, probably effectuated by UreG. This chain is Urease accessory protein UreG, found in Aliarcobacter butzleri (strain RM4018) (Arcobacter butzleri).